Reading from the N-terminus, the 351-residue chain is Ribosomal RNA large subunit methyltransferase M (351 aa).

Residues Ser-186, Ala-219–Gly-222, Asp-238, Asp-258, and Asp-274 each bind S-adenosyl-L-methionine. The active-site Proton acceptor is Lys-303.

It belongs to the class I-like SAM-binding methyltransferase superfamily. RNA methyltransferase RlmE family. RlmM subfamily. In terms of assembly, monomer.

The protein resides in the cytoplasm. The enzyme catalyses cytidine(2498) in 23S rRNA + S-adenosyl-L-methionine = 2'-O-methylcytidine(2498) in 23S rRNA + S-adenosyl-L-homocysteine + H(+). Its function is as follows. Catalyzes the 2'-O-methylation at nucleotide C2498 in 23S rRNA. In Xylella fastidiosa (strain M23), this protein is Ribosomal RNA large subunit methyltransferase M.